The sequence spans 367 residues: MGSNSFGRLFTVTTFGESHGPAIGCVIDGCPPGLEIAPEEFTHDLQRRATGKSRHTSARREADEIEILSGVYEGRTTGTPIGLLIRNTDQRSKDYTNIAQQFRPGHADYTYWQKYGIRDPRGGGRSSARETTMRVAAGVIAKKWLKQRYGVLVRGFLSQLGEIRPSGFDWDAVEDNPFFWPHAAQVPELETYMDALRKSGDSVGARVDVVAGGVPPGWGEPIYGKLDSELAAALMSINAVKGVEIGDGFASAAQKGTEHRDLITPEGFLSNHAGGILGGISTGQAVTASMVLKPTSSLRLPGATVDADGAVVDVITTGRHDPCVGIRATPIAEAMMALVLMDQALRHRAQCGDVGEVSPLIPGQADV.

Residues arginine 48 and arginine 54 each contribute to the NADP(+) site. FMN is bound by residues 125–127 (RSS), 238–239 (NA), glycine 278, 293–297 (KPTSS), and arginine 319.

This sequence belongs to the chorismate synthase family. Homotetramer. FMNH2 is required as a cofactor.

The catalysed reaction is 5-O-(1-carboxyvinyl)-3-phosphoshikimate = chorismate + phosphate. Its pathway is metabolic intermediate biosynthesis; chorismate biosynthesis; chorismate from D-erythrose 4-phosphate and phosphoenolpyruvate: step 7/7. Catalyzes the anti-1,4-elimination of the C-3 phosphate and the C-6 proR hydrogen from 5-enolpyruvylshikimate-3-phosphate (EPSP) to yield chorismate, which is the branch point compound that serves as the starting substrate for the three terminal pathways of aromatic amino acid biosynthesis. This reaction introduces a second double bond into the aromatic ring system. This Xanthomonas campestris pv. campestris (strain 8004) protein is Chorismate synthase.